We begin with the raw amino-acid sequence, 566 residues long: MKKRRSSKVILSLAIVVALLAAVEPNAALAAAPPSAMQSYVEAMQPGWNLGNSLDAVGADETLARGNPRITKELIQNIAAQGYKSIRIPVTWDSHIGAAPNYQIEAAYLNRVQEVVQWALDANLYVMINVHHDSWLWISKMESQHDQVLARYNAIWTQIANKFKNSPSKLMFESVNEPRFTDGGTTDEAKQQKMLDELNVSFFNIVRNSGGQNATRPLVLSTLEASPTQERMTALYNTMTKLNDKNLIATVHFYGFWPFSVNIAGYTKFDAETQNDIITTFDNVYNTFVAKGIPVVVGEYGLLGFDKNTGVIEQGEKLKFFEFFAQYVKQKSISTMLWDNGQHFNRTSFKWSDPDLFNMIKASWTGRSSTASSDLIHVKQGTAVKDTSVQLNLNGNTLTSLSVNGTTLKSGTDYTLNSSRLTFKASQLTKLTSLGKLGVNATIVTKFNRGADWKFNVVLYNTPKLSSTTGTTSSFAIPTAFNGDQLATMEAVYVNGGNAGPHNWTSFKEFETTFSPAYSEGKIKLQQAFFNEVNDTTVTLKFQFWSGEIVNYTIKKSGSTVTGTAS.

The N-terminal stretch at 1–30 (MKKRRSSKVILSLAIVVALLAAVEPNAALA) is a signal peptide. The active-site Proton donor is Glu-177. Glu-299 acts as the Nucleophile in catalysis.

The protein belongs to the glycosyl hydrolase 5 (cellulase A) family.

It carries out the reaction Endohydrolysis of (1-&gt;4)-beta-D-glucosidic linkages in cellulose, lichenin and cereal beta-D-glucans.. The protein is Endoglucanase B (celB) of Paenibacillus lautus (Bacillus lautus).